We begin with the raw amino-acid sequence, 1039 residues long: Error-prone DNA polymerase (1039 aa).

The protein belongs to the DNA polymerase type-C family. DnaE2 subfamily.

It localises to the cytoplasm. The catalysed reaction is DNA(n) + a 2'-deoxyribonucleoside 5'-triphosphate = DNA(n+1) + diphosphate. Functionally, DNA polymerase involved in damage-induced mutagenesis and translesion synthesis (TLS). It is not the major replicative DNA polymerase. This chain is Error-prone DNA polymerase, found in Idiomarina loihiensis (strain ATCC BAA-735 / DSM 15497 / L2-TR).